The sequence spans 189 residues: UPF0301 protein RrIowa_0061 (189 aa).

The protein belongs to the UPF0301 (AlgH) family.

In Rickettsia rickettsii (strain Iowa), this protein is UPF0301 protein RrIowa_0061.